The sequence spans 585 residues: Arginine--tRNA ligase (585 aa).

Residues 131–141 carry the 'HIGH' region motif; that stretch reads ANPTGPMHVGH.

This sequence belongs to the class-I aminoacyl-tRNA synthetase family. As to quaternary structure, monomer.

Its subcellular location is the cytoplasm. It catalyses the reaction tRNA(Arg) + L-arginine + ATP = L-arginyl-tRNA(Arg) + AMP + diphosphate. This is Arginine--tRNA ligase from Rhizobium leguminosarum bv. trifolii (strain WSM2304).